The sequence spans 235 residues: 2-C-methyl-D-erythritol 4-phosphate cytidylyltransferase (235 aa).

Belongs to the IspD/TarI cytidylyltransferase family. IspD subfamily.

The catalysed reaction is 2-C-methyl-D-erythritol 4-phosphate + CTP + H(+) = 4-CDP-2-C-methyl-D-erythritol + diphosphate. It participates in isoprenoid biosynthesis; isopentenyl diphosphate biosynthesis via DXP pathway; isopentenyl diphosphate from 1-deoxy-D-xylulose 5-phosphate: step 2/6. Functionally, catalyzes the formation of 4-diphosphocytidyl-2-C-methyl-D-erythritol from CTP and 2-C-methyl-D-erythritol 4-phosphate (MEP). The protein is 2-C-methyl-D-erythritol 4-phosphate cytidylyltransferase of Synechococcus sp. (strain JA-3-3Ab) (Cyanobacteria bacterium Yellowstone A-Prime).